The chain runs to 1264 residues: TBC1 domain family member 9 (1264 aa).

GRAM domains lie at 146–213 and 293–361; these read VKFH…EKNA and ERYR…EKAD. The disordered stretch occupies residues 410 to 456; that stretch reads KEFSGSCNSSDDEVYSRPSSLVSSSPQRSTSSDADGERPFNLNGNSV. The span at 425 to 441 shows a compositional bias: low complexity; that stretch reads SRPSSLVSSSPQRSTSS. The region spanning 515 to 702 is the Rab-GAP TBC domain; that stretch reads GIPESMRGEL…VVVDCFFYEG (188 aa). In terms of domain architecture, EF-hand spans 886-921; that stretch reads HSDVLASRLFQLLDENGDSLINFREFVSGLSAACHG. Over residues 1119-1138 the composition is skewed to basic and acidic residues; sequence SEEHSLGGQMEDIKLEDSSP. The segment at 1119 to 1162 is disordered; sequence SEEHSLGGQMEDIKLEDSSPRDNGACSSMLISDDDTKDDSSMSS.

In terms of biological role, may act as a GTPase-activating protein for Rab family protein(s). In Mus musculus (Mouse), this protein is TBC1 domain family member 9 (Tbc1d9).